The sequence spans 1111 residues: MRLILLVLLATWQVVVDTRAPTFPDKLTQQLQQQGTTEPQGDHVCTVKTIVDDYELKKVIHTVVYNDTEQCLNPLTGFQCTVEKRGQKASYQRQLVKKEKYVKQCCDGYYQTKDHFCLPDCNPPCKKGKCIEPGKCECDPGYGGKYCASSCSVGTWGLGCSKSCDCENGANCDPELGTCICTSGFQGERCEKPCPDNKWGPNCVKSCPCQNGGKCNKEGKCVCSDGWGGEFCLNKCEEGKFGAECKFECNCQNGATCDNTNGKCICKSGYHGALCENECSVGFFGSGCTQKCDCLNNQNCDSSSGECKCIGWTGKHCDIGCSRGRFGLQCKQNCTCPGLEFSDSNASCDAKTGQCQCESGYKGPKCDERKCDAEQYGADCSKTCTCVRENTLMCAPNTGFCRCKPGFYGDNCELACSKDSYGPNCEKQAMCDWNHASECNPETGSCVCKPGRTGKNCSEPCPLDFYGPNCAHQCQCNQRGVGCDGADGKCQCDRGWTGHRCEHHCPADTFGANCEKRCKCPKGIGCDPITGECTCPAGLQGANCDIGCPEGSYGPGCKLHCKCVNGKCDKETGECTCQPGFFGSDCSTTCSKGKYGESCELSCPCSDASCSKQTGKCLCPLGTKGVSCDQKCDPNTFGFLCQETVTPSPCASTDPKNGVCLSCPPGSSGIHCEHNCPAGSYGDGCQQVCSCADGHGCDPTTGECICEPGYHGKTCSEKCPDGKYGYGCALDCPKCASGSTCDHINGLCICPAGLEGALCTRPCSAGFWGNGCRQVCRCTSEYKQCNAQTGECSCPAGFQGDRCDKPCEDGYYGPDCIKKCKCQGTATSSCNRVSGACHCHPGFTGEFCHALCPESTFGLKCSKECPKDGCGDGYECDAAIGCCHVDQMSCGKAKQEFEALNGAGRSTGLTWFFVLLIVALCGGLGLIALFYRNKYQKEKDPDMPTVSFHKAPNNDEGREFQNPLYSRQSVFPDSDAFSSENNGNHQGGPPNGLLTLEEEELENKKIHGRSAAGRGNNDYASLDEVAGEGSSSSASASASRRGLNSSEQSRRPLLEEHDEEEFDEPHENSISPAHAVTTSNHNENPYADISSPDPVTQNSANKKRAQDNLYT.

An N-terminal signal peptide occupies residues 1–18 (MRLILLVLLATWQVVVDT). Topologically, residues 19 to 910 (RAPTFPDKLT…NGAGRSTGLT (892 aa)) are extracellular. The region spanning 41 to 113 (GDHVCTVKTI…QCCDGYYQTK (73 aa)) is the EMI domain. Cystine bridges form between Cys45–Cys106, Cys71–Cys80, Cys105–Cys117, Cys121–Cys130, Cys125–Cys136, Cys138–Cys147, Cys160–Cys172, Cys166–Cys179, Cys181–Cys190, Cys203–Cys215, Cys209–Cys221, Cys223–Cys232, Cys245–Cys257, Cys251–Cys264, and Cys266–Cys275. Asn66 carries an N-linked (GlcNAc...) asparagine glycan. EGF-like domains follow at residues 118-148 (LPDC…KYCA), 156-191 (WGLG…ERCE), 199-233 (WGPN…EFCL), and 241-276 (FGAE…ALCE). 2 N-linked (GlcNAc...) asparagine glycosylation sites follow: Asn333 and Asn345. One can recognise an EGF-like 5 domain in the interval 421 to 458 (YGPNCEKQAMCDWNHASECNPETGSCVCKPGRTGKNCS). Cystine bridges form between Cys425–Cys439, Cys431–Cys446, and Cys448–Cys457. Residue Asn456 is glycosylated (N-linked (GlcNAc...) asparagine). The FU repeat unit spans residues 629–680 (DQKCDPNTFGFLCQETVTPSPCASTDPKNGVCLSCPPGSSGIHCEHNCPAGS). One can recognise an EGF-like 6 domain in the interval 681 to 716 (YGDGCQQVCSCADGHGCDPTTGECICEPGYHGKTCS). Disulfide bonds link Cys685/Cys697, Cys691/Cys704, and Cys706/Cys715. A helical membrane pass occupies residues 911–931 (WFFVLLIVALCGGLGLIALFY). The interval 931 to 1007 (YRNKYQKEKD…EEELENKKIH (77 aa)) is interaction with trim-21. Topologically, residues 932–1111 (RNKYQKEKDP…KKRAQDNLYT (180 aa)) are cytoplasmic. Disordered regions lie at residues 940–993 (DPDM…PNGL) and 1006–1111 (IHGR…NLYT). An NPXY motif is present at residues 962-965 (NPLY). A compositionally biased stretch (polar residues) spans 963–980 (PLYSRQSVFPDSDAFSSE). Tyr1019 carries the phosphotyrosine; by SRC modification. The short motif at 1019 to 1022 (YASL) is the YXXL element. The segment covering 1030 to 1039 (SSSSASASAS) has biased composition (low complexity). The span at 1068–1083 (NSISPAHAVTTSNHNE) shows a compositional bias: polar residues.

Interacts (via C-terminus) with ced-6 (via PTB domain). Interacts with nck-1; the interaction is required for ced-1 degradation through the proteasome pathway. Interacts with V-ATPase vha-10. In terms of processing, phosphorylation of Tyr-1019, within the YXXL motif, by src-1 is thought to initiate phagosomal formation. 'Lys-48'-linked polyubiquitination by trim-21 leads to proteasomal degradation. In terms of tissue distribution, expressed in engulfing cells and syncytium hypodermal cells. Ced-7 is necessary for clustering around cell corpses prior to engulfment.

It localises to the cell membrane. The protein resides in the cytoplasmic vesicle. Its subcellular location is the phagosome membrane. Functionally, involved in programmed cell death, also called apoptosis, in both somatic and germ cells. Acts by recruiting ced-6 to phagosomes which enables actin-dependent cytoskeletal reorganization and subsequent engulfment of the apoptotic cell corpse. Has a role in the association of ppk-3 and rab-7 with the phagosomal surface which is necessary for the incorporation of lysosomes to phagosomes during phagosome maturation. Activates the expression of unfolded protein response genes, which are involved in the immune response to live bacteria. In Caenorhabditis elegans, this protein is Cell death abnormality protein 1.